We begin with the raw amino-acid sequence, 156 residues long: Small ribosomal subunit protein uS7 (156 aa).

Belongs to the universal ribosomal protein uS7 family. As to quaternary structure, part of the 30S ribosomal subunit. Contacts proteins S9 and S11.

In terms of biological role, one of the primary rRNA binding proteins, it binds directly to 16S rRNA where it nucleates assembly of the head domain of the 30S subunit. Is located at the subunit interface close to the decoding center, probably blocks exit of the E-site tRNA. The protein is Small ribosomal subunit protein uS7 of Histophilus somni (strain 129Pt) (Haemophilus somnus).